Reading from the N-terminus, the 330-residue chain is DNA-directed RNA polymerase subunit alpha (330 aa).

The tract at residues 1–235 is alpha N-terminal domain (alpha-NTD); sequence MQGSVTEFLK…EQLEAFVDLR (235 aa). Residues 249-330 are alpha C-terminal domain (alpha-CTD); it reads FDPILLRPVD…WPPASIADNE (82 aa).

It belongs to the RNA polymerase alpha chain family. In terms of assembly, homodimer. The RNAP catalytic core consists of 2 alpha, 1 beta, 1 beta' and 1 omega subunit. When a sigma factor is associated with the core the holoenzyme is formed, which can initiate transcription.

The enzyme catalyses RNA(n) + a ribonucleoside 5'-triphosphate = RNA(n+1) + diphosphate. In terms of biological role, DNA-dependent RNA polymerase catalyzes the transcription of DNA into RNA using the four ribonucleoside triphosphates as substrates. This is DNA-directed RNA polymerase subunit alpha from Yersinia enterocolitica serotype O:8 / biotype 1B (strain NCTC 13174 / 8081).